The sequence spans 388 residues: Chorismate synthase (388 aa).

NADP(+) is bound by residues Arg39 and Arg45. The segment at 95–118 (EKNEKSRRVSRPRPGHADLVGGMK) is disordered. Residues 130-132 (RSS), 251-252 (NA), Gly296, 311-315 (KPIPT), and Arg337 each bind FMN.

Belongs to the chorismate synthase family. Homotetramer. It depends on FMNH2 as a cofactor.

It carries out the reaction 5-O-(1-carboxyvinyl)-3-phosphoshikimate = chorismate + phosphate. It functions in the pathway metabolic intermediate biosynthesis; chorismate biosynthesis; chorismate from D-erythrose 4-phosphate and phosphoenolpyruvate: step 7/7. Functionally, catalyzes the anti-1,4-elimination of the C-3 phosphate and the C-6 proR hydrogen from 5-enolpyruvylshikimate-3-phosphate (EPSP) to yield chorismate, which is the branch point compound that serves as the starting substrate for the three terminal pathways of aromatic amino acid biosynthesis. This reaction introduces a second double bond into the aromatic ring system. This chain is Chorismate synthase, found in Listeria monocytogenes serotype 4b (strain CLIP80459).